The primary structure comprises 249 residues: Enolase-phosphatase E1 (249 aa).

Mg(2+) contacts are provided by Asp-15 and Glu-17. Substrate contacts are provided by residues 146–147 (SS) and Lys-180. Asp-205 is a binding site for Mg(2+).

The protein belongs to the HAD-like hydrolase superfamily. MasA/MtnC family. As to quaternary structure, monomer. Mg(2+) is required as a cofactor.

Its subcellular location is the cytoplasm. The protein resides in the nucleus. The enzyme catalyses 5-methylsulfanyl-2,3-dioxopentyl phosphate + H2O = 1,2-dihydroxy-5-(methylsulfanyl)pent-1-en-3-one + phosphate. It functions in the pathway amino-acid biosynthesis; L-methionine biosynthesis via salvage pathway; L-methionine from S-methyl-5-thio-alpha-D-ribose 1-phosphate: step 3/6. The protein operates within amino-acid biosynthesis; L-methionine biosynthesis via salvage pathway; L-methionine from S-methyl-5-thio-alpha-D-ribose 1-phosphate: step 4/6. In terms of biological role, bifunctional enzyme that catalyzes the enolization of 2,3-diketo-5-methylthiopentyl-1-phosphate (DK-MTP-1-P) into the intermediate 2-hydroxy-3-keto-5-methylthiopentenyl-1-phosphate (HK-MTPenyl-1-P), which is then dephosphorylated to form the acireductone 1,2-dihydroxy-3-keto-5-methylthiopentene (DHK-MTPene). The sequence is that of Enolase-phosphatase E1 from Caenorhabditis briggsae.